We begin with the raw amino-acid sequence, 475 residues long: Maintenance of mitochondrial morphology protein 1 (475 aa).

Residues 1–14 (MSETFSPNLTFTEG) are Lumenal-facing. Residues 15 to 35 (FVLGQASFLIILLLFIRYVVF) traverse the membrane as a helical segment. Residues 36–475 (SPSEQIDHEG…VTPGQVGTSR (440 aa)) are Cytoplasmic-facing. Residues 80-278 (PAESSDWVNV…HPNHISLALP (199 aa)) form the SMP-LTD domain. 2 disordered regions span residues 321–381 (NPVE…GQPQ) and 394–475 (SYPH…GTSR). Residues 341–351 (PPTPLVQPPGT) show a composition bias toward pro residues. Polar residues-rich tracts occupy residues 353-380 (PTLS…QGQP) and 394-403 (SYPHYNTYTL). Residues 442-464 (STTSSLTPSQSQSQFRFRGQFAS) are compositionally biased toward low complexity.

The protein belongs to the MMM1 family. In terms of assembly, homodimer. Component of the ER-mitochondria encounter structure (ERMES) or MDM complex, composed of MMM1, MDM10, MDM12 and MDM34. An MMM1 homodimer associates with one molecule of MDM12 on each side in a pairwise head-to-tail manner, and the SMP-LTD domains of MMM1 and MDM12 generate a continuous hydrophobic tunnel for phospholipid trafficking.

It is found in the endoplasmic reticulum membrane. Its function is as follows. Component of the ERMES/MDM complex, which serves as a molecular tether to connect the endoplasmic reticulum (ER) and mitochondria. Components of this complex are involved in the control of mitochondrial shape and protein biogenesis, and function in nonvesicular lipid trafficking between the ER and mitochondria. The MDM12-MMM1 subcomplex functions in the major beta-barrel assembly pathway that is responsible for biogenesis of all outer membrane beta-barrel proteins, and acts in a late step after the SAM complex. The MDM10-MDM12-MMM1 subcomplex further acts in the TOM40-specific pathway after the action of the MDM12-MMM1 complex. Essential for establishing and maintaining the structure of mitochondria and maintenance of mtDNA nucleoids. In Cryptococcus neoformans var. neoformans serotype D (strain B-3501A) (Filobasidiella neoformans), this protein is Maintenance of mitochondrial morphology protein 1.